Consider the following 144-residue polypeptide: Maximins 2/H8 type 1 (144 aa).

The signal sequence occupies residues 1 to 18 (MNFKYIVAVSFLIASAYA). A propeptide spanning residues 19 to 43 (RSEENEIQSLSQRDVLEEESLREMR) is cleaved from the precursor. Asparagine amide is present on N70. Residues 74 to 123 (TAEEHEVMKRLETVMRDLDSLDYPEEASERETRGFNQEEIANLFTKKEKR) constitute a propeptide that is removed on maturation. I143 is subject to Isoleucine amide.

This sequence belongs to the bombinin family. Expressed by the skin glands.

Its subcellular location is the secreted. Maximin-2 shows antibacterial activity against both Gram-positive and Gram-negative bacteria. It also shows antimicrobial activity against the fungus C.albicans, but not against A.flavus nor P.uticale. It has little hemolytic activity. Its function is as follows. Maximin-H8 shows antimicrobial activity against bacteria and against the fungus C.albicans. Shows strong hemolytic activity. This chain is Maximins 2/H8 type 1, found in Bombina maxima (Giant fire-bellied toad).